We begin with the raw amino-acid sequence, 385 residues long: V-type proton ATPase subunit C (385 aa).

Belongs to the V-ATPase C subunit family. V-ATPase is a heteromultimeric enzyme made up of two complexes: the ATP-hydrolytic V1 complex and the proton translocation V0 complex. The V1 complex consists of three catalytic AB heterodimers that form a heterohexamer, three peripheral stalks each consisting of EG heterodimers, one central rotor including subunits D and F, and the regulatory subunits C and H. The proton translocation complex V0 consists of the proton transport subunit a, a ring of proteolipid subunits c9c'', rotary subunit d, subunits e and f, and the accessory subunits VhaAC45 and ATP6AP2.

Subunit of the V1 complex of vacuolar(H+)-ATPase (V-ATPase), a multisubunit enzyme composed of a peripheral complex (V1) that hydrolyzes ATP and a membrane integral complex (V0) that translocates protons. V-ATPase is responsible for acidifying and maintaining the pH of intracellular compartments and in some cell types, is targeted to the plasma membrane, where it is responsible for acidifying the extracellular environment. Subunit C is necessary for the assembly of the catalytic sector of the enzyme and is likely to have a specific function in its catalytic activity. The sequence is that of V-type proton ATPase subunit C from Manduca sexta (Tobacco hawkmoth).